The chain runs to 204 residues: Sex-determining region Y protein (204 aa).

The tract at residues 59–136 (RVKRPMNAFI…YKYRPRRKAK (78 aa)) is sufficient for interaction with KPNB1. Residues 60 to 128 (VKRPMNAFIV…MHREKYPNYK (69 aa)) constitute a DNA-binding region (HMG box). 2 required for nuclear localization regions span residues 61–77 (KRPM…QRRK) and 130–136 (RPRRKAK). The interval 107-139 (WPFFQEAQKLQAMHREKYPNYKYRPRRKAKMLP) is sufficient for interaction with EP300. Lys136 is subject to N6-acetyllysine. The segment at 138–155 (LPKNCSLLPADPASVLCS) is necessary for interaction with ZNF208 isoform KRAB-O. The segment at 175–204 (RMEHQLGHLPPINAASSPQQRDRYSHWTKL) is disordered. Basic and acidic residues predominate over residues 194–204 (QRDRYSHWTKL). A necessary for interaction with SLC9A3R2 region spans residues 198 to 204 (YSHWTKL).

It belongs to the SRY family. Interacts with CALM, EP300, HDAC3, KPNB1, ZNF208 isoform KRAB-O, PARP1, SLC9A3R2 and WT1. The interaction with EP300 modulates its DNA-binding activity. The interaction with KPNB1 is sensitive to dissociation by Ran in the GTP-bound form. Interaction with PARP1 impaired its DNA-binding activity. Post-translationally, phosphorylated on serine residues by PKA. Phosphorylation by PKA enhances its DNA-binding activity and stimulates transcription repression. Acetylation of Lys-136 contributes to its nuclear localization and enhances its interaction with KPNB1. Deacetylated by HDAC3. In terms of processing, poly-ADP-ribosylated by PARP1. ADP-ribosylation reduces its DNA-binding activity.

It localises to the nucleus speckle. The protein localises to the cytoplasm. The protein resides in the nucleus. Functionally, transcriptional regulator that controls a genetic switch in male development. It is necessary and sufficient for initiating male sex determination by directing the development of supporting cell precursors (pre-Sertoli cells) as Sertoli rather than granulosa cells. Involved in different aspects of gene regulation including promoter activation or repression. Binds to the DNA consensus sequence 5'-[AT]AACAA[AT]-3'. SRY HMG box recognizes DNA by partial intercalation in the minor groove and promotes DNA bending. Also involved in pre-mRNA splicing. In male adult brain involved in the maintenance of motor functions of dopaminergic neurons. The protein is Sex-determining region Y protein of Homo sapiens (Human).